Consider the following 87-residue polypeptide: Small ribosomal subunit protein uS15c (87 aa).

This sequence belongs to the universal ribosomal protein uS15 family. In terms of assembly, part of the 30S ribosomal subunit.

It localises to the plastid. It is found in the chloroplast. The chain is Small ribosomal subunit protein uS15c (rps15) from Solanum lycopersicum (Tomato).